The sequence spans 369 residues: ERCC4 domain-containing protein EP364R (369 aa).

An ERCC4 domain is found at 3–101 (FLVADHREHH…QLYFFVEGPA (99 aa)). Residues 339–369 (PLHDVSDDASSDASSPTGHQTLSKEMSLNTA) form a disordered region. The span at 354–369 (PTGHQTLSKEMSLNTA) shows a compositional bias: polar residues.

Belongs to the asfivirus EP364R family.

Plays a role in the inhibition of type I interferon signaling pathway. Mechanistically, specifically interacts with 2',3'-cGAMP and cleaves it via its phosphodiesterase activity. In turn, prevents 2',3'-cGAMP interaction with host ER-resident STING1 leading to inhibition of downstream signaling pathway and type I interferon production. This chain is ERCC4 domain-containing protein EP364R, found in African swine fever virus (isolate Tick/South Africa/Pretoriuskop Pr4/1996) (ASFV).